Consider the following 239-residue polypeptide: tRNA1(Val) (adenine(37)-N6)-methyltransferase (239 aa).

This sequence belongs to the methyltransferase superfamily. tRNA (adenine-N(6)-)-methyltransferase family.

It is found in the cytoplasm. It catalyses the reaction adenosine(37) in tRNA1(Val) + S-adenosyl-L-methionine = N(6)-methyladenosine(37) in tRNA1(Val) + S-adenosyl-L-homocysteine + H(+). Functionally, specifically methylates the adenine in position 37 of tRNA(1)(Val) (anticodon cmo5UAC). This Vibrio parahaemolyticus serotype O3:K6 (strain RIMD 2210633) protein is tRNA1(Val) (adenine(37)-N6)-methyltransferase.